The sequence spans 575 residues: Transcription factor ncaA (575 aa).

Composition is skewed to polar residues over residues 1–15 (MAET…TPEN) and 22–34 (DNQS…SKNP). Disordered stretches follow at residues 1-40 (MAET…VKDR) and 79-114 (IRSG…AGGE). The UBZ4-type; degenerate zinc-finger motif lies at 39-66 (DRKCQYCHQAFTSSSLGRHLDQYLFKKK). The segment covering 93–102 (GKRDTPERAM) has biased composition (basic and acidic residues). Positions 337–371 (FAREVEKRKTLDEQLARVQQEANQLRAQVEKLGSC) form a coiled coil. A disordered region spans residues 429–575 (GRVGVGYGNP…ASGPPPSSGA (147 aa)). A compositionally biased stretch (basic and acidic residues) spans 440-454 (LDDRSSADTKARATE). A compositionally biased stretch (low complexity) spans 455–471 (EPPASAALASTSTSAPP). Residues 472-485 (SAHPPPRALQPAPG) are compositionally biased toward pro residues. Composition is skewed to polar residues over residues 493–513 (DQSS…TSPY) and 538–558 (SAAN…HQSL).

Interacts with atrR.

The protein resides in the nucleus. Its function is as follows. Transcription factor required for normal voriconazole resistance. Contributes to the function of atrR and regulates the expression of the atrR target gene abcG1. The protein is Transcription factor ncaA of Aspergillus fumigatus (strain ATCC MYA-4609 / CBS 101355 / FGSC A1100 / Af293) (Neosartorya fumigata).